We begin with the raw amino-acid sequence, 375 residues long: 23S rRNA (uracil(747)-C(5))-methyltransferase RlmC (375 aa).

Residues Cys3, Cys11, Cys14, and Cys87 each coordinate [4Fe-4S] cluster. Positions 212, 241, 262, and 307 each coordinate S-adenosyl-L-methionine. The active-site Nucleophile is Cys334.

The protein belongs to the class I-like SAM-binding methyltransferase superfamily. RNA M5U methyltransferase family. RlmC subfamily.

The catalysed reaction is uridine(747) in 23S rRNA + S-adenosyl-L-methionine = 5-methyluridine(747) in 23S rRNA + S-adenosyl-L-homocysteine + H(+). Its function is as follows. Catalyzes the formation of 5-methyl-uridine at position 747 (m5U747) in 23S rRNA. The sequence is that of 23S rRNA (uracil(747)-C(5))-methyltransferase RlmC from Escherichia coli O157:H7.